The chain runs to 153 residues: Endoribonuclease YbeY (153 aa).

Zn(2+)-binding residues include His114, His118, and His124.

This sequence belongs to the endoribonuclease YbeY family. Zn(2+) serves as cofactor.

It is found in the cytoplasm. In terms of biological role, single strand-specific metallo-endoribonuclease involved in late-stage 70S ribosome quality control and in maturation of the 3' terminus of the 16S rRNA. The sequence is that of Endoribonuclease YbeY from Shewanella putrefaciens (strain CN-32 / ATCC BAA-453).